Here is a 335-residue protein sequence, read N- to C-terminus: Cell division protein ZipA (335 aa).

The Periplasmic portion of the chain corresponds to 1–6 (MENLQL). A helical transmembrane segment spans residues 7–27 (VLFVLGAVAIIAVLVHGFWSI). Residues 28 to 335 (RRQQPKSLKE…SYLQRIRAQM (308 aa)) lie on the Cytoplasmic side of the membrane. Disordered stretches follow at residues 37–128 (ESPM…NEEV) and 163–185 (RPAP…VSVE). The span at 170–185 (APQSVAPASVEPVSVE) shows a compositional bias: low complexity.

This sequence belongs to the ZipA family. Interacts with FtsZ via their C-terminal domains.

It is found in the cell inner membrane. In terms of biological role, essential cell division protein that stabilizes the FtsZ protofilaments by cross-linking them and that serves as a cytoplasmic membrane anchor for the Z ring. Also required for the recruitment to the septal ring of downstream cell division proteins. In Shewanella loihica (strain ATCC BAA-1088 / PV-4), this protein is Cell division protein ZipA.